Consider the following 92-residue polypeptide: Probable Fe(2+)-trafficking protein (92 aa).

Belongs to the Fe(2+)-trafficking protein family.

Its function is as follows. Could be a mediator in iron transactions between iron acquisition and iron-requiring processes, such as synthesis and/or repair of Fe-S clusters in biosynthetic enzymes. This Shewanella piezotolerans (strain WP3 / JCM 13877) protein is Probable Fe(2+)-trafficking protein.